The primary structure comprises 79 residues: Sperm-specific basic nuclear protein SP4 (79 aa).

Residues 1 to 79 (MSKVSGGSRR…ARDYGSDYRS (79 aa)) form a disordered region. Basic residues predominate over residues 9 to 60 (RRTRARRPMSNRRGRRSQSAAHRSRAQRRRRRTGTTRRARTSTARRARTRTA). 2 consecutive repeats follow at residues 45–52 (RRARTSTA) and 53–60 (RRARTRTA). Basic and acidic residues predominate over residues 61–79 (RRSDLTRMMARDYGSDYRS).

It is found in the nucleus. In Xenopus laevis (African clawed frog), this protein is Sperm-specific basic nuclear protein SP4 (sp4-a).